The following is a 339-amino-acid chain: Terpene synthase 7 (339 aa).

The DDxx(x)D/E motif signature appears at D79–S84. The NDxxSxxxD/E motif signature appears at N219–E227.

It belongs to the terpene synthase family.

It catalyses the reaction (2E,6E)-farnesyl diphosphate = (-)-beta-barbatene + diphosphate. Its function is as follows. Terpene synthase that converts its substrate farnesyl diphosphate (FPP) into the sesquiterpene beta-barbatene. The sequence is that of Terpene synthase 7 from Dictyostelium discoideum (Social amoeba).